Reading from the N-terminus, the 132-residue chain is UPF0102 protein Acel_1550 (132 aa).

This sequence belongs to the UPF0102 family.

This Acidothermus cellulolyticus (strain ATCC 43068 / DSM 8971 / 11B) protein is UPF0102 protein Acel_1550.